A 266-amino-acid chain; its full sequence is MKTALKIAYVGTNFYGSQAQPGLPTVESELRKALEEAGAIKLGTKIAMAGRTDAGVHALGQVVAFEQADPKLTAPRIINSKLPKDLWAYARAEVPDDFDPRRHATSREYRYILYAPDVIERRLKECSSRFLGTHDFTNFSSVEAGKYPVRTVTRLDIAKRGDFYIIDIEADSFLWNMVRKIVTALRLVGENKRPDGWIEKMFDPEYREGIPPAAPGGLYLSRVNYDGIAFEEDEYARQRAYQRMLNSFEWHHTIAEIYKEFKDAMK.

The active-site Nucleophile is the Asp53. Residue Tyr109 participates in substrate binding.

This sequence belongs to the tRNA pseudouridine synthase TruA family.

The catalysed reaction is uridine(38/39/40) in tRNA = pseudouridine(38/39/40) in tRNA. Functionally, formation of pseudouridine at positions 38, 39 and 40 in the anticodon stem and loop of transfer RNAs. The sequence is that of tRNA pseudouridine synthase A from Methanocella arvoryzae (strain DSM 22066 / NBRC 105507 / MRE50).